We begin with the raw amino-acid sequence, 156 residues long: ATP synthase subunit b (156 aa).

The helical transmembrane segment at 12–32 (VAFFIFVLFCMKYVWPPVIAA) threads the bilayer.

It belongs to the ATPase B chain family. F-type ATPases have 2 components, F(1) - the catalytic core - and F(0) - the membrane proton channel. F(1) has five subunits: alpha(3), beta(3), gamma(1), delta(1), epsilon(1). F(0) has three main subunits: a(1), b(2) and c(10-14). The alpha and beta chains form an alternating ring which encloses part of the gamma chain. F(1) is attached to F(0) by a central stalk formed by the gamma and epsilon chains, while a peripheral stalk is formed by the delta and b chains.

The protein localises to the cell inner membrane. Functionally, f(1)F(0) ATP synthase produces ATP from ADP in the presence of a proton or sodium gradient. F-type ATPases consist of two structural domains, F(1) containing the extramembraneous catalytic core and F(0) containing the membrane proton channel, linked together by a central stalk and a peripheral stalk. During catalysis, ATP synthesis in the catalytic domain of F(1) is coupled via a rotary mechanism of the central stalk subunits to proton translocation. Its function is as follows. Component of the F(0) channel, it forms part of the peripheral stalk, linking F(1) to F(0). The protein is ATP synthase subunit b of Pseudomonas syringae pv. tomato (strain ATCC BAA-871 / DC3000).